The primary structure comprises 302 residues: tRNA pseudouridine synthase B (302 aa).

The active-site Nucleophile is Asp-38.

It belongs to the pseudouridine synthase TruB family. Type 1 subfamily.

It catalyses the reaction uridine(55) in tRNA = pseudouridine(55) in tRNA. Its function is as follows. Responsible for synthesis of pseudouridine from uracil-55 in the psi GC loop of transfer RNAs. This chain is tRNA pseudouridine synthase B, found in Geobacillus thermodenitrificans (strain NG80-2).